Reading from the N-terminus, the 258-residue chain is UPF0246 protein YaaA (258 aa).

Belongs to the UPF0246 family.

The protein is UPF0246 protein YaaA of Escherichia coli (strain SE11).